A 284-amino-acid chain; its full sequence is Acetylglutamate kinase (284 aa).

Residues 66–67 (GG), Arg-88, and Asn-179 each bind substrate.

The protein belongs to the acetylglutamate kinase family. ArgB subfamily.

Its subcellular location is the cytoplasm. It carries out the reaction N-acetyl-L-glutamate + ATP = N-acetyl-L-glutamyl 5-phosphate + ADP. The protein operates within amino-acid biosynthesis; L-arginine biosynthesis; N(2)-acetyl-L-ornithine from L-glutamate: step 2/4. Functionally, catalyzes the ATP-dependent phosphorylation of N-acetyl-L-glutamate. The protein is Acetylglutamate kinase of Actinobacillus pleuropneumoniae serotype 3 (strain JL03).